We begin with the raw amino-acid sequence, 252 residues long: Phosphomannomutase (252 aa).

Residue D13 is the Nucleophile of the active site. The Mg(2+) site is built by D13 and D15. D15 functions as the Proton donor/acceptor in the catalytic mechanism. The alpha-D-mannose 1-phosphate site is built by R22, R124, R135, R142, S180, and D182. D208, Y220, and T225 together coordinate Mg(2+).

This sequence belongs to the eukaryotic PMM family. As to quaternary structure, homodimer. Mg(2+) serves as cofactor.

It is found in the cytoplasm. The enzyme catalyses alpha-D-mannose 1-phosphate = D-mannose 6-phosphate. It participates in nucleotide-sugar biosynthesis; GDP-alpha-D-mannose biosynthesis; alpha-D-mannose 1-phosphate from D-fructose 6-phosphate: step 2/2. Its function is as follows. Catalyzes the interconversion of mannose-6-phosphate to mannose-1-phosphate, the precursor for the synthesis of GDP-mannose. GDP-mannose is an essential sugar nucleotide for the synthesis of D-mannose-containing cell wall polysaccharides (galactomannans and glucomannans), glycolipids, glycoproteins and the antioxidant L-ascorbate. Can complement the yeast temperature-sensitive mutant sec53-6. This chain is Phosphomannomutase, found in Solanum lycopersicum (Tomato).